The chain runs to 519 residues: ATP synthase subunit alpha (519 aa).

175 to 182 contacts ATP; the sequence is GDRQTGKT.

The protein belongs to the ATPase alpha/beta chains family. In terms of assembly, F-type ATPases have 2 components, CF(1) - the catalytic core - and CF(0) - the membrane proton channel. CF(1) has five subunits: alpha(3), beta(3), gamma(1), delta(1), epsilon(1). CF(0) has three main subunits: a(1), b(2) and c(9-12). The alpha and beta chains form an alternating ring which encloses part of the gamma chain. CF(1) is attached to CF(0) by a central stalk formed by the gamma and epsilon chains, while a peripheral stalk is formed by the delta and b chains.

It is found in the cell inner membrane. It carries out the reaction ATP + H2O + 4 H(+)(in) = ADP + phosphate + 5 H(+)(out). In terms of biological role, produces ATP from ADP in the presence of a proton gradient across the membrane. The alpha chain is a regulatory subunit. This Acinetobacter baylyi (strain ATCC 33305 / BD413 / ADP1) protein is ATP synthase subunit alpha.